The sequence spans 194 residues: Small ribosomal subunit protein uS11m (194 aa).

This sequence belongs to the universal ribosomal protein uS11 family. Component of the mitochondrial small ribosomal subunit (mt-SSU). Mature mammalian 55S mitochondrial ribosomes consist of a small (28S) and a large (39S) subunit. The 28S small subunit contains a 12S ribosomal RNA (12S mt-rRNA) and 30 different proteins. The 39S large subunit contains a 16S rRNA (16S mt-rRNA), a copy of mitochondrial valine transfer RNA (mt-tRNA(Val)), which plays an integral structural role, and 52 different proteins.

The protein resides in the mitochondrion. The protein is Small ribosomal subunit protein uS11m (MRPS11) of Homo sapiens (Human).